The chain runs to 430 residues: 3-phosphoshikimate 1-carboxyvinyltransferase (430 aa).

Positions 25, 26, and 30 each coordinate 3-phosphoshikimate. Lys25 contacts phosphoenolpyruvate. Phosphoenolpyruvate is bound by residues Gly98 and Arg126. 3-phosphoshikimate is bound by residues Ser169, Ser170, Gln171, Ser198, Glu313, and His342. Gln171 serves as a coordination point for phosphoenolpyruvate. Catalysis depends on Glu313, which acts as the Proton acceptor. Phosphoenolpyruvate is bound by residues Arg346, Arg387, and Lys412.

This sequence belongs to the EPSP synthase family. Monomer.

It localises to the cytoplasm. The enzyme catalyses 3-phosphoshikimate + phosphoenolpyruvate = 5-O-(1-carboxyvinyl)-3-phosphoshikimate + phosphate. It functions in the pathway metabolic intermediate biosynthesis; chorismate biosynthesis; chorismate from D-erythrose 4-phosphate and phosphoenolpyruvate: step 6/7. Its function is as follows. Catalyzes the transfer of the enolpyruvyl moiety of phosphoenolpyruvate (PEP) to the 5-hydroxyl of shikimate-3-phosphate (S3P) to produce enolpyruvyl shikimate-3-phosphate and inorganic phosphate. This chain is 3-phosphoshikimate 1-carboxyvinyltransferase, found in Mycobacterium leprae (strain TN).